A 449-amino-acid chain; its full sequence is MAKVAGFRFELKQLFHLMWPILITQFAQAGLGLIDTIMAGHLSANDLAAIAVGVGLWMPVMLLFSAIMIATTPLVAEAKGARTPEHIPVIVRQSLWVAVSLGVIAMLILQLMPFLLPILGVPESLQPKAGLFLHAIGFGMPAVTMYAALRGYSEALGYPRPVTVISLLALVVLVPLNYIFMYGIGPVPHLGSAGCGFATAILQWLMLITLASYIYRAKAYQSTQVFSHWERINLTLVKRILKLGLPIGLAVFFEVSIFSTGAIVLSPLGDTLVAAHQIAMSVTSQLFMIPMSLAIALTIRVGMYYGEKNWVSMRLVQKLGLATATFFAMCTMSLIWFARPQIVAIYTQDPAVFDIALYLLLFAMAYQLMDAWQVGAAGCLRGMQDTKGPMWITLIAYWVVAFPVGTYLARVAKMGPAGVWLGLITGLSIACVLLLMRLYRNNHKLAQQS.

The next 12 membrane-spanning stretches (helical) occupy residues 17 to 39 (LMWP…TIMA), 54 to 76 (VGLW…PLVA), 97 to 119 (VAVS…LPIL), 129 to 151 (AGLF…ALRG), 164 to 186 (VISL…GIGP), 196 to 215 (GFAT…SYIY), 243 to 265 (LGLP…AIVL), 280 to 302 (MSVT…IRVG), 315 to 337 (LVQK…LIWF), 352 to 369 (VFDI…YQLM), 390 to 412 (MWIT…ARVA), and 417 to 439 (AGVW…MRLY).

This sequence belongs to the multi antimicrobial extrusion (MATE) (TC 2.A.66.1) family.

The protein resides in the cell inner membrane. Multidrug efflux pump. The chain is Probable multidrug resistance protein NorM (norM) from Acinetobacter baylyi (strain ATCC 33305 / BD413 / ADP1).